The sequence spans 209 residues: dITP/XTP pyrophosphatase (209 aa).

7–12 (TGNKGK) is a binding site for substrate. D73 acts as the Proton acceptor in catalysis. D73 contributes to the Mg(2+) binding site. Residues S74, 155 to 158 (FGYD), K178, and 183 to 184 (HR) each bind substrate.

The protein belongs to the HAM1 NTPase family. As to quaternary structure, homodimer. The cofactor is Mg(2+).

The catalysed reaction is XTP + H2O = XMP + diphosphate + H(+). It catalyses the reaction dITP + H2O = dIMP + diphosphate + H(+). The enzyme catalyses ITP + H2O = IMP + diphosphate + H(+). Pyrophosphatase that catalyzes the hydrolysis of nucleoside triphosphates to their monophosphate derivatives, with a high preference for the non-canonical purine nucleotides XTP (xanthosine triphosphate), dITP (deoxyinosine triphosphate) and ITP. Seems to function as a house-cleaning enzyme that removes non-canonical purine nucleotides from the nucleotide pool, thus preventing their incorporation into DNA/RNA and avoiding chromosomal lesions. The polypeptide is dITP/XTP pyrophosphatase (Sulfurovum sp. (strain NBC37-1)).